Reading from the N-terminus, the 337-residue chain is UPF0284 protein AF_0276 (337 aa).

It belongs to the UPF0284 family.

The protein is UPF0284 protein AF_0276 of Archaeoglobus fulgidus (strain ATCC 49558 / DSM 4304 / JCM 9628 / NBRC 100126 / VC-16).